Here is a 463-residue protein sequence, read N- to C-terminus: Probable ECA polymerase (463 aa).

The next 11 membrane-spanning stretches (helical) occupy residues 6-26 (FGGL…LTWM), 39-59 (FSLL…VLVF), 65-85 (VVPV…YAVY), 112-132 (ANLT…IFFL), 154-174 (GVAL…VYFL), 180-200 (AWLL…VIVG), 201-221 (GTRA…IVRG), 222-242 (WITL…MFWL), 340-360 (LVVM…GLVI), 377-397 (YKAA…IVLT), and 408-428 (VVFF…LYWL).

Belongs to the WzyE family. Probably part of a complex composed of WzxE, WzyE and WzzE.

The protein localises to the cell inner membrane. It functions in the pathway bacterial outer membrane biogenesis; enterobacterial common antigen biosynthesis. Functionally, probably involved in the polymerization of enterobacterial common antigen (ECA) trisaccharide repeat units. This chain is Probable ECA polymerase, found in Pectobacterium atrosepticum (strain SCRI 1043 / ATCC BAA-672) (Erwinia carotovora subsp. atroseptica).